A 196-amino-acid polypeptide reads, in one-letter code: Carnitine operon protein CaiE (196 aa).

The interval 173 to 196 is disordered; that stretch reads TQPLRQMEENRPRLQGTTDVTPKR. The segment covering 187 to 196 has biased composition (polar residues); the sequence is QGTTDVTPKR.

The protein belongs to the transferase hexapeptide repeat family.

It participates in amine and polyamine metabolism; carnitine metabolism. In terms of biological role, overproduction of CaiE stimulates the activity of CaiB and CaiD. This chain is Carnitine operon protein CaiE, found in Escherichia coli O127:H6 (strain E2348/69 / EPEC).